A 987-amino-acid polypeptide reads, in one-letter code: Sarcosine oxidase subunit alpha (987 aa).

The NAD(+) site is built by aspartate 198, glutamate 199, serine 206, alanine 244, and glycine 445. (6R)-5,10-methylene-5,6,7,8-tetrahydrofolate is bound by residues threonine 714 and glutamate 806.

Belongs to the GcvT family. In terms of assembly, heterotetramer composed of subunits alpha (SoxA), beta (SoxB), gamma (SoxG) and delta (SoxD). NAD(+) serves as cofactor.

It localises to the cytoplasm. The enzyme catalyses sarcosine + (6S)-5,6,7,8-tetrahydrofolate + O2 = (6R)-5,10-methylene-5,6,7,8-tetrahydrofolate + glycine + H2O2. It catalyses the reaction sarcosine + O2 + H2O = formaldehyde + glycine + H2O2. In terms of biological role, in the presence of tetrahydrofolate, catalyzes the oxidative demethylation of sarcosine to yield glycine, 5,10-methylenetetrahydrofolate and hydrogen peroxide. In the absence of tetrahydrofolate, catalyzes the oxidative demethylation of sarcosine to yield glycine, formaldehyde and hydrogen peroxide. The polypeptide is Sarcosine oxidase subunit alpha (soxA) (Rhizobium meliloti (strain 1021) (Ensifer meliloti)).